The following is a 271-amino-acid chain: Structure-specific endonuclease subunit SLX1 (271 aa).

Positions 9-94 constitute a GIY-YIG domain; the sequence is RFFGVYLLYC…PQASRRLTHV (86 aa). The SLX1-type zinc-finger motif lies at 182-234; the sequence is CTLCARMLQDEEGPLCCPHPGCPLRAHIICLAEEFLQEEPGQLLPLEGHCPSC.

Belongs to the SLX1 family. In terms of assembly, forms a heterodimer with SLX4. The cofactor is a divalent metal cation.

The protein localises to the nucleus. Catalytic subunit of the SLX1-SLX4 structure-specific endonuclease that resolves DNA secondary structures generated during DNA repair and recombination. Has endonuclease activity towards branched DNA substrates, introducing single-strand cuts in duplex DNA close to junctions with ss-DNA. Has a preference for 5'-flap structures, and promotes symmetrical cleavage of static and migrating Holliday junctions (HJs). Resolves HJs by generating two pairs of ligatable, nicked duplex products. The sequence is that of Structure-specific endonuclease subunit SLX1 (Slx1b) from Rattus norvegicus (Rat).